Consider the following 445-residue polypeptide: MREILHIQGGQCGNQIGAKFWEVICDEHGIDQTGKYAGDSDLQLERINVYYNEASGGRFVPRAVLMDLEPGTMDSLRSGPYGQIFRPDNFVFGQSGAGNNWAKGHYTEGAELIDSVLDVVRKEAENCDCLQGFQVCHSLGGGTGSGMGTLLISKIREEYPDRMMLTFSVFPSPKVSDTVVEPYNATLSVHQLVENADECMVLDNEALYDICFRTLKLATPTFGDLNHLISATMSGVTCCLRFPGQLNSDLRKLAVNLIPFPRLHFFMVGFAPLTSRGSQQYRALTVPELTQQMWDSKNMMCAADPRHGRYLTASAMFRGKMSTKEVDEQMLNVQNKNSSYFVEWIPNNVKSSVCDIPPTGLSMSSTFVGNSTSIQEMFRRVSEQFTAMFRRKAFLHWYTGEGMDEMEFTEAESNMNDLVAEYQQYQDATADEEEEYDEEEEEEAA.

Positions 11, 69, 138, 142, 143, 144, 204, and 226 each coordinate GTP. Mg(2+) is bound at residue Glu-69. Residues 421–445 (EYQQYQDATADEEEEYDEEEEEEAA) form a disordered region. The span at 429–445 (TADEEEEYDEEEEEEAA) shows a compositional bias: acidic residues.

Belongs to the tubulin family. As to quaternary structure, dimer of alpha and beta chains. A typical microtubule is a hollow water-filled tube with an outer diameter of 25 nm and an inner diameter of 15 nM. Alpha-beta heterodimers associate head-to-tail to form protofilaments running lengthwise along the microtubule wall with the beta-tubulin subunit facing the microtubule plus end conferring a structural polarity. Microtubules usually have 13 protofilaments but different protofilament numbers can be found in some organisms and specialized cells. Mg(2+) serves as cofactor.

It localises to the cytoplasm. It is found in the cytoskeleton. Its function is as follows. Tubulin is the major constituent of microtubules, a cylinder consisting of laterally associated linear protofilaments composed of alpha- and beta-tubulin heterodimers. Microtubules grow by the addition of GTP-tubulin dimers to the microtubule end, where a stabilizing cap forms. Below the cap, tubulin dimers are in GDP-bound state, owing to GTPase activity of alpha-tubulin. In Triticum aestivum (Wheat), this protein is Tubulin beta-3 chain (TUBB3).